The primary structure comprises 224 residues: MSDICDANKLKHRFRGYFPVVIDVETAGFNSQTDALLEIAVTLLKMDDEGMLGIDKTLHFHIEPFEGANLEPAALAFNGIDPNNPLRGAVSEKEAFLDIFKAVKKAQKAADCHRCIIVAHNAAFDHGFVSKAIERCDLKRSPFHPFATFDTATLAGLAIGHTVLAKACMMAGIPFDNKEAHSALYDTERTAELFCYIVNRWKQLGGWPLLAAAGAQDAESDTEE.

Residues 20–194 (VVIDVETAGF…YDTERTAELF (175 aa)) form the Exonuclease domain. The Mg(2+) site is built by Asp23, Glu25, His181, and Asp186. His181 acts as the Proton donor/acceptor in catalysis.

Belongs to the RNase T family. Homodimer. Requires Mg(2+) as cofactor.

In terms of biological role, trims short 3' overhangs of a variety of RNA species, leaving a one or two nucleotide 3' overhang. Responsible for the end-turnover of tRNA: specifically removes the terminal AMP residue from uncharged tRNA (tRNA-C-C-A). Also appears to be involved in tRNA biosynthesis. In Shewanella putrefaciens (strain CN-32 / ATCC BAA-453), this protein is Ribonuclease T.